We begin with the raw amino-acid sequence, 71 residues long: Small ribosomal subunit protein bS18 (71 aa).

This sequence belongs to the bacterial ribosomal protein bS18 family. Part of the 30S ribosomal subunit. Forms a tight heterodimer with protein bS6.

Its function is as follows. Binds as a heterodimer with protein bS6 to the central domain of the 16S rRNA, where it helps stabilize the platform of the 30S subunit. In Nostoc sp. (strain PCC 7120 / SAG 25.82 / UTEX 2576), this protein is Small ribosomal subunit protein bS18.